A 369-amino-acid polypeptide reads, in one-letter code: Proton-coupled zinc antiporter SLC30A8 (369 aa).

Residues 1–79 (MEFLERTYLV…AKWKLCSASA (79 aa)) lie on the Cytoplasmic side of the membrane. The interval 31–52 (PVNKDQCPRERPEELESGGMYH) is disordered. Residues 32–44 (VNKDQCPRERPEE) are compositionally biased toward basic and acidic residues. Positions 52, 53, and 54 each coordinate Zn(2+). An HCH Motif; seals regulatory zinc-binding pocket motif is present at residues 52-54 (HCH). Residues 80–100 (ICFIFMIAEVVGGHIAGSLAV) traverse the membrane as a helical segment. At 101–103 (VTD) the chain is on the lumenal, vesicle side. Residues 104–124 (AAHLLIDLTSFLLSLFSLWLS) form a helical membrane-spanning segment. Residues histidine 106, aspartate 110, and histidine 137 each contribute to the Zn(2+) site. The Cytoplasmic segment spans residues 125-140 (SKPPSKRLTFGWHRAE). The chain crosses the membrane as a helical span at residues 141 to 161 (ILGALLSILCIWVVTGVLVYL). The Lumenal, vesicle portion of the chain corresponds to 162–175 (ACERLLYPDYQIQA). Residues 176–196 (TVMIIVSSCAVAANIVLTVVL) form a helical membrane-spanning segment. Residues 197–217 (HQRCLGHNHKEVQANASVRAA) lie on the Cytoplasmic side of the membrane. A helical membrane pass occupies residues 218–238 (FVHALGDLFQSISVLISALII). The Zn(2+) site is built by histidine 220 and aspartate 224. Over 239–245 (YFKPEYK) the chain is Lumenal, vesicle. A helical membrane pass occupies residues 246 to 266 (IADPICTFIFSILVLASTITI). Residues 267–369 (LKDFSILLME…DCLFCEDPCD (103 aa)) are Cytoplasmic-facing. Zn(2+) contacts are provided by histidine 301, histidine 318, histidine 345, glutamate 352, cysteine 361, and cysteine 364.

The protein belongs to the cation diffusion facilitator (CDF) transporter (TC 2.A.4) family. SLC30A subfamily. As to quaternary structure, homodimer. In the endocrine pancreas, expressed in insulin-producing beta cells. Expressed at relatively high levels in subcutaneous fat tissue from lean persons; much lower levels in visceral fat, whether from lean or obese individuals, and in subcutaneous fat tissue from obese individuals. Expressed in peripheral blood mononuclear cells, including T-cells and B-cells, with great variation among individuals ranging from negative to strongly positive.

It localises to the cytoplasmic vesicle. Its subcellular location is the secretory vesicle membrane. It is found in the cell membrane. It carries out the reaction Zn(2+)(in) + 2 H(+)(out) = Zn(2+)(out) + 2 H(+)(in). In terms of biological role, proton-coupled zinc ion antiporter mediating the entry of zinc into the lumen of pancreatic beta cell secretory granules, thereby regulating insulin secretion. This is Proton-coupled zinc antiporter SLC30A8 from Homo sapiens (Human).